Reading from the N-terminus, the 571-residue chain is Urease subunit alpha (571 aa).

In terms of domain architecture, Urease spans 129–571 (GGIDTHIHFI…LPMAQRYFLF (443 aa)). The Ni(2+) site is built by His134, His136, and Lys217. At Lys217 the chain carries N6-carboxylysine. A substrate-binding site is contributed by His219. 2 residues coordinate Ni(2+): His246 and His272. His320 functions as the Proton donor in the catalytic mechanism. Asp360 is a binding site for Ni(2+).

It belongs to the metallo-dependent hydrolases superfamily. Urease alpha subunit family. Heterotrimer of UreA (gamma), UreB (beta) and UreC (alpha) subunits. Three heterotrimers associate to form the active enzyme. Ni cation serves as cofactor. Post-translationally, carboxylation allows a single lysine to coordinate two nickel ions.

It is found in the cytoplasm. It carries out the reaction urea + 2 H2O + H(+) = hydrogencarbonate + 2 NH4(+). It participates in nitrogen metabolism; urea degradation; CO(2) and NH(3) from urea (urease route): step 1/1. The chain is Urease subunit alpha from Cupriavidus pinatubonensis (strain JMP 134 / LMG 1197) (Cupriavidus necator (strain JMP 134)).